Reading from the N-terminus, the 112-residue chain is FK506-binding protein 1 (112 aa).

The span at 1–10 (MSAPATTQVE) shows a compositional bias: polar residues. The segment at 1–20 (MSAPATTQVEILQEGDGKTF) is disordered. A PPIase FKBP-type domain is found at 24–112 (GDLVTIHYTG…LFDVELLNVN (89 aa)).

Belongs to the FKBP-type PPIase family. FKBP1 subfamily.

The protein resides in the cytoplasm. It carries out the reaction [protein]-peptidylproline (omega=180) = [protein]-peptidylproline (omega=0). Its activity is regulated as follows. Inhibited by both FK506 and rapamycin. Its function is as follows. PPIases accelerate the folding of proteins. It catalyzes the cis-trans isomerization of proline imidic peptide bonds in oligopeptides. In Debaryomyces hansenii (strain ATCC 36239 / CBS 767 / BCRC 21394 / JCM 1990 / NBRC 0083 / IGC 2968) (Yeast), this protein is FK506-binding protein 1 (FPR1).